The primary structure comprises 244 residues: Large ribosomal subunit protein uL30A (244 aa).

Residues 1–26 are disordered; the sequence is MAAEKILTPESQLKKSKAQQKTAEQV.

It belongs to the universal ribosomal protein uL30 family. As to quaternary structure, component of the large ribosomal subunit (LSU). Mature yeast ribosomes consist of a small (40S) and a large (60S) subunit. The 40S small subunit contains 1 molecule of ribosomal RNA (18S rRNA) and 33 different proteins (encoded by 57 genes). The large 60S subunit contains 3 rRNA molecules (25S, 5.8S and 5S rRNA) and 46 different proteins (encoded by 81 genes).

It localises to the cytoplasm. Component of the ribosome, a large ribonucleoprotein complex responsible for the synthesis of proteins in the cell. The small ribosomal subunit (SSU) binds messenger RNAs (mRNAs) and translates the encoded message by selecting cognate aminoacyl-transfer RNA (tRNA) molecules. The large subunit (LSU) contains the ribosomal catalytic site termed the peptidyl transferase center (PTC), which catalyzes the formation of peptide bonds, thereby polymerizing the amino acids delivered by tRNAs into a polypeptide chain. The nascent polypeptides leave the ribosome through a tunnel in the LSU and interact with protein factors that function in enzymatic processing, targeting, and the membrane insertion of nascent chains at the exit of the ribosomal tunnel. In Saccharomyces cerevisiae (strain ATCC 204508 / S288c) (Baker's yeast), this protein is Large ribosomal subunit protein uL30A.